The sequence spans 566 residues: Oxygen-dependent choline dehydrogenase (566 aa).

7-36 (DYIICGAGSAGNVLATRLTEDPNVTVLLLE) contacts FAD. Positions 185–204 (EGFGPMDRTVTPKGRRASTA) are disordered. H474 serves as the catalytic Proton acceptor.

Belongs to the GMC oxidoreductase family. The cofactor is FAD.

It catalyses the reaction choline + A = betaine aldehyde + AH2. It carries out the reaction betaine aldehyde + NAD(+) + H2O = glycine betaine + NADH + 2 H(+). Its pathway is amine and polyamine biosynthesis; betaine biosynthesis via choline pathway; betaine aldehyde from choline (cytochrome c reductase route): step 1/1. Involved in the biosynthesis of the osmoprotectant glycine betaine. Catalyzes the oxidation of choline to betaine aldehyde and betaine aldehyde to glycine betaine at the same rate. The protein is Oxygen-dependent choline dehydrogenase of Burkholderia vietnamiensis (strain G4 / LMG 22486) (Burkholderia cepacia (strain R1808)).